Here is a 210-residue protein sequence, read N- to C-terminus: Leucyl/phenylalanyl-tRNA--protein transferase (210 aa).

It belongs to the L/F-transferase family.

The protein localises to the cytoplasm. It catalyses the reaction N-terminal L-lysyl-[protein] + L-leucyl-tRNA(Leu) = N-terminal L-leucyl-L-lysyl-[protein] + tRNA(Leu) + H(+). The enzyme catalyses N-terminal L-arginyl-[protein] + L-leucyl-tRNA(Leu) = N-terminal L-leucyl-L-arginyl-[protein] + tRNA(Leu) + H(+). It carries out the reaction L-phenylalanyl-tRNA(Phe) + an N-terminal L-alpha-aminoacyl-[protein] = an N-terminal L-phenylalanyl-L-alpha-aminoacyl-[protein] + tRNA(Phe). Functions in the N-end rule pathway of protein degradation where it conjugates Leu, Phe and, less efficiently, Met from aminoacyl-tRNAs to the N-termini of proteins containing an N-terminal arginine or lysine. The sequence is that of Leucyl/phenylalanyl-tRNA--protein transferase from Roseobacter denitrificans (strain ATCC 33942 / OCh 114) (Erythrobacter sp. (strain OCh 114)).